A 104-amino-acid chain; its full sequence is 10 kDa heat shock protein, mitochondrial (104 aa).

At S81 the chain carries Phosphoserine.

Belongs to the GroES chaperonin family. Homohexamer.

It is found in the mitochondrion matrix. Eukaryotic CPN10 homolog which is essential for mitochondrial protein biogenesis, together with CPN60. Binds to CPN60 in the presence of Mg-ATP and suppresses the ATPase activity of the latter. This is 10 kDa heat shock protein, mitochondrial (hsp10) from Schizosaccharomyces pombe (strain 972 / ATCC 24843) (Fission yeast).